Reading from the N-terminus, the 295-residue chain is Protease HtpX (295 aa).

Helical transmembrane passes span 4 to 24 and 41 to 61; these read ILLF…TLSL and SSLL…SLFI. Residue His-147 participates in Zn(2+) binding. Glu-148 is an active-site residue. His-151 contributes to the Zn(2+) binding site. The next 2 membrane-spanning stretches (helical) occupy residues 158 to 178 and 199 to 219; these read VTLA…ARII and VATI…VMWF. Glu-224 is a Zn(2+) binding site.

The protein belongs to the peptidase M48B family. The cofactor is Zn(2+).

It localises to the cell inner membrane. The protein is Protease HtpX of Pseudomonas putida (strain W619).